The following is a 127-amino-acid chain: Large ribosomal subunit protein bL20 (127 aa).

This sequence belongs to the bacterial ribosomal protein bL20 family.

Binds directly to 23S ribosomal RNA and is necessary for the in vitro assembly process of the 50S ribosomal subunit. It is not involved in the protein synthesizing functions of that subunit. The chain is Large ribosomal subunit protein bL20 (rplT) from Streptomyces coelicolor (strain ATCC BAA-471 / A3(2) / M145).